A 634-amino-acid polypeptide reads, in one-letter code: Chaperone protein dnaK2 (634 aa).

T197 carries the post-translational modification Phosphothreonine; by autocatalysis. The disordered stretch occupies residues 592-634 (IGSSVYQQPGNQPPAPGTPDSNESNDKGGDDDVIDADFTETKD). Residues 622–634 (DDVIDADFTETKD) show a composition bias toward acidic residues.

Belongs to the heat shock protein 70 family.

Its function is as follows. Acts as a chaperone. This Prochlorococcus marinus subsp. pastoris (strain CCMP1986 / NIES-2087 / MED4) protein is Chaperone protein dnaK2 (dnaK2).